We begin with the raw amino-acid sequence, 250 residues long: Ribonuclease PH (250 aa).

Residues R86 and 124-126 contribute to the phosphate site; that span reads GTR.

This sequence belongs to the RNase PH family. As to quaternary structure, homohexameric ring arranged as a trimer of dimers.

It carries out the reaction tRNA(n+1) + phosphate = tRNA(n) + a ribonucleoside 5'-diphosphate. Functionally, phosphorolytic 3'-5' exoribonuclease that plays an important role in tRNA 3'-end maturation. Removes nucleotide residues following the 3'-CCA terminus of tRNAs; can also add nucleotides to the ends of RNA molecules by using nucleoside diphosphates as substrates, but this may not be physiologically important. Probably plays a role in initiation of 16S rRNA degradation (leading to ribosome degradation) during starvation. This Exiguobacterium sibiricum (strain DSM 17290 / CCUG 55495 / CIP 109462 / JCM 13490 / 255-15) protein is Ribonuclease PH.